Reading from the N-terminus, the 100-residue chain is NADH-quinone oxidoreductase subunit K (100 aa).

Helical transmembrane passes span 4–24 (TSYY…GVLL), 29–49 (IVVF…LVAF), and 60–80 (VIVF…LALL).

The protein belongs to the complex I subunit 4L family. In terms of assembly, NDH-1 is composed of 14 different subunits. Subunits NuoA, H, J, K, L, M, N constitute the membrane sector of the complex.

Its subcellular location is the cell membrane. It catalyses the reaction a quinone + NADH + 5 H(+)(in) = a quinol + NAD(+) + 4 H(+)(out). Its function is as follows. NDH-1 shuttles electrons from NADH, via FMN and iron-sulfur (Fe-S) centers, to quinones in the respiratory chain. The immediate electron acceptor for the enzyme in this species is believed to be ubiquinone. Couples the redox reaction to proton translocation (for every two electrons transferred, four hydrogen ions are translocated across the cytoplasmic membrane), and thus conserves the redox energy in a proton gradient. In Chloroflexus aurantiacus (strain ATCC 29366 / DSM 635 / J-10-fl), this protein is NADH-quinone oxidoreductase subunit K.